We begin with the raw amino-acid sequence, 113 residues long: Hydrogenase maturation factor HypA (113 aa).

His2 contacts Ni(2+). Positions 73, 76, 89, and 92 each coordinate Zn(2+).

The protein belongs to the HypA/HybF family.

Its function is as follows. Involved in the maturation of [NiFe] hydrogenases. Required for nickel insertion into the metal center of the hydrogenase. The sequence is that of Hydrogenase maturation factor HypA from Bradyrhizobium sp. (strain ORS 278).